We begin with the raw amino-acid sequence, 125 residues long: uncharacterized protein (125 aa).

The protein to transposase of insertion sequence IS6501.

This is an uncharacterized protein from Sinorhizobium fredii (strain NBRC 101917 / NGR234).